The following is a 607-amino-acid chain: Elongation factor 4 (607 aa).

Residues 11 to 193 (SKIRNFSIIA…QIVEKVPAPT (183 aa)) enclose the tr-type G domain. GTP-binding positions include 23–28 (DHGKST) and 140–143 (NKID).

Belongs to the TRAFAC class translation factor GTPase superfamily. Classic translation factor GTPase family. LepA subfamily.

The protein localises to the cell membrane. The catalysed reaction is GTP + H2O = GDP + phosphate + H(+). Its function is as follows. Required for accurate and efficient protein synthesis under certain stress conditions. May act as a fidelity factor of the translation reaction, by catalyzing a one-codon backward translocation of tRNAs on improperly translocated ribosomes. Back-translocation proceeds from a post-translocation (POST) complex to a pre-translocation (PRE) complex, thus giving elongation factor G a second chance to translocate the tRNAs correctly. Binds to ribosomes in a GTP-dependent manner. This chain is Elongation factor 4, found in Bacillus cereus (strain AH820).